A 563-amino-acid polypeptide reads, in one-letter code: Arginine--tRNA ligase (563 aa).

Positions 119 to 129 match the 'HIGH' region motif; sequence ANPTGPLHVGR.

This sequence belongs to the class-I aminoacyl-tRNA synthetase family.

The protein resides in the cytoplasm. The enzyme catalyses tRNA(Arg) + L-arginine + ATP = L-arginyl-tRNA(Arg) + AMP + diphosphate. The sequence is that of Arginine--tRNA ligase from Methanocella arvoryzae (strain DSM 22066 / NBRC 105507 / MRE50).